The following is a 548-amino-acid chain: Chaperonin GroEL (548 aa).

ATP is bound by residues Thr-30 to Pro-33, Lys-51, Asp-87 to Thr-91, Gly-415, and Asp-496.

This sequence belongs to the chaperonin (HSP60) family. Forms a cylinder of 14 subunits composed of two heptameric rings stacked back-to-back. Interacts with the co-chaperonin GroES.

Its subcellular location is the cytoplasm. It catalyses the reaction ATP + H2O + a folded polypeptide = ADP + phosphate + an unfolded polypeptide.. In terms of biological role, together with its co-chaperonin GroES, plays an essential role in assisting protein folding. The GroEL-GroES system forms a nano-cage that allows encapsulation of the non-native substrate proteins and provides a physical environment optimized to promote and accelerate protein folding. This chain is Chaperonin GroEL, found in Haemophilus influenzae (strain PittGG).